We begin with the raw amino-acid sequence, 453 residues long: Chromosomal replication initiator protein DnaA (453 aa).

The interval 1 to 74 is domain I, interacts with DnaA modulators; sequence MKEKQFWNRI…GFEIYDAEIT (74 aa). A domain II region spans residues 74–113; that stretch reads TPHYIFTKPQDTTSSQVEEATNLTLYNYSPKLVSIPYSDT. Positions 114 to 331 are domain III, AAA+ region; that stretch reads GLKEKYTFDN…GAINDITLIA (218 aa). Residues glycine 158, glycine 160, lysine 161, and threonine 162 each contribute to the ATP site. The tract at residues 332 to 453 is domain IV, binds dsDNA; it reads RVKKIKDITI…EIESIKKKIK (122 aa).

It belongs to the DnaA family. In terms of assembly, oligomerizes as a right-handed, spiral filament on DNA at oriC.

It is found in the cytoplasm. Plays an essential role in the initiation and regulation of chromosomal replication. ATP-DnaA binds to the origin of replication (oriC) to initiate formation of the DNA replication initiation complex once per cell cycle. Binds the DnaA box (a 9 base pair repeat at the origin) and separates the double-stranded (ds)DNA. Forms a right-handed helical filament on oriC DNA; dsDNA binds to the exterior of the filament while single-stranded (ss)DNA is stabiized in the filament's interior. The ATP-DnaA-oriC complex binds and stabilizes one strand of the AT-rich DNA unwinding element (DUE), permitting loading of DNA polymerase. After initiation quickly degrades to an ADP-DnaA complex that is not apt for DNA replication. Binds acidic phospholipids. The polypeptide is Chromosomal replication initiator protein DnaA (Streptococcus pneumoniae serotype 19F (strain G54)).